The chain runs to 603 residues: Myotubularin (603 aa).

The segment covering 1 to 13 (MASASTSKYNSHS) has biased composition (polar residues). Positions 1–25 (MASASTSKYNSHSLENESIKRTSRD) are disordered. A phosphoserine mark is found at S13 and S18. Basic and acidic residues predominate over residues 14–25 (LENESIKRTSRD). The 69-residue stretch at 29–97 (RDLTEAVPRL…GVISRIEKMG (69 aa)) folds into the GRAM domain. A Myotubularin phosphatase domain is found at 163–538 (GWTVYNPVEE…RHLELWVNYY (376 aa)). 3 residues coordinate a 1,2-diacyl-sn-glycero-3-phospho-(1D-myo-inositol-3,5-bisphosphate): N288, N313, and I314. A 1,2-diacyl-sn-glycero-3-phospho-(1D-myo-inositol-3-phosphate) is bound by residues N288, N313, and I314. The active-site Phosphocysteine intermediate is the C375. 8 residues coordinate a 1,2-diacyl-sn-glycero-3-phospho-(1D-myo-inositol-3,5-bisphosphate): S376, D377, G378, W379, D380, R381, K417, and R421. A 1,2-diacyl-sn-glycero-3-phospho-(1D-myo-inositol-3-phosphate) contacts are provided by S376, D377, G378, W379, D380, and R381. R421 is a binding site for a 1,2-diacyl-sn-glycero-3-phospho-(1D-myo-inositol-3-phosphate). Position 495 is a phosphothreonine (T495). The interval 579 to 603 (SAKLSDPPTSPSSPSQMMPHVQTHF) is disordered. Phosphoserine is present on S588.

Belongs to the protein-tyrosine phosphatase family. Non-receptor class myotubularin subfamily. Heterodimer with MTMR12. Interacts with KMT2A/MLL1 (via SET domain). Interacts with DES in skeletal muscle but not in cardiac muscle. Interacts with SPEG.

Its subcellular location is the cytoplasm. The protein resides in the cell membrane. It is found in the cell projection. It localises to the filopodium. The protein localises to the ruffle. Its subcellular location is the late endosome. The protein resides in the myofibril. It is found in the sarcomere. The enzyme catalyses a 1,2-diacyl-sn-glycero-3-phospho-(1D-myo-inositol-3-phosphate) + H2O = a 1,2-diacyl-sn-glycero-3-phospho-(1D-myo-inositol) + phosphate. The catalysed reaction is a 1,2-diacyl-sn-glycero-3-phospho-(1D-myo-inositol-3,5-bisphosphate) + H2O = a 1,2-diacyl-sn-glycero-3-phospho-(1D-myo-inositol-5-phosphate) + phosphate. It catalyses the reaction 1,2-dioctanoyl-sn-glycero-3-phospho-(1-D-myo-inositol-3-phosphate) + H2O = 1,2-dioctanoyl-sn-glycero-3-phospho-(1D-myo-inositol) + phosphate. It carries out the reaction 1,2-dioctanoyl-sn-glycero-3-phospho-(1D-myo-inositol-3,5-bisphosphate) + H2O = 1,2-dioctanoyl-sn-glycero-3-phospho-(1D-myo-inositol-5-phosphate) + phosphate. The enzyme catalyses 1,2-dihexadecanoyl-sn-glycero-3-phospho-(1D-myo-inositol-3,5-phosphate) + H2O = 1,2-dihexadecanoyl-sn-glycero-3-phospho-(1D-myo-inositol-5-phosphate) + phosphate. Its activity is regulated as follows. Allosterically activated by phosphatidylinositol 5-phosphate (PI5P). In terms of biological role, lipid phosphatase which dephosphorylates phosphatidylinositol 3-monophosphate (PI3P) and phosphatidylinositol 3,5-bisphosphate (PI(3,5)P2). Has also been shown to dephosphorylate phosphotyrosine- and phosphoserine-containing peptides. Negatively regulates EGFR degradation through regulation of EGFR trafficking from the late endosome to the lysosome. Plays a role in vacuolar formation and morphology. Regulates desmin intermediate filament assembly and architecture. Plays a role in mitochondrial morphology and positioning. Required for skeletal muscle maintenance but not for myogenesis. In skeletal muscles, stabilizes MTMR12 protein levels. This Pongo abelii (Sumatran orangutan) protein is Myotubularin.